The chain runs to 130 residues: Chemotaxis protein CheY-3 (130 aa).

In terms of domain architecture, Response regulatory spans 10-127 (KILIVDDFST…TLKEKLDKIF (118 aa)). D15, D16, D60, and N62 together coordinate Mg(2+). 4-aspartylphosphate is present on D60.

Interacts with FliM. It depends on Mg(2+) as a cofactor.

It localises to the cytoplasm. Its function is as follows. Acts as a response regulator to control chemotaxis. Involved in the transmission of sensory signals from the chemoreceptors to the flagellar motors. Switches the flagellar rotation by binding to the flagellar motor switch protein FliM. In its active (phosphorylated or acetylated) form, exhibits enhanced binding to a switch component, FliM, at the flagellar motor which induces a change from counterclockwise to clockwise flagellar rotation. The chain is Chemotaxis protein CheY-3 from Vibrio cholerae serotype O1 (strain ATCC 39315 / El Tor Inaba N16961).